The sequence spans 464 residues: Putative F-box/LRR-repeat protein At3g59160 (464 aa).

Residues 12-60 (KDMINDLPDALLCHVLSYLTTKEAASTSLLSRRWRYLLAFVPNLEFDDS) form the F-box domain. LRR repeat units lie at residues 172 to 198 (TLKI…HLES), 200 to 225 (MFDE…VLHH), 233 to 258 (SCSV…GMHE), 336 to 367 (VLCL…TIQS), 368 to 393 (TPKV…VFQG), and 408 to 433 (KIEK…VLHY).

This is Putative F-box/LRR-repeat protein At3g59160 from Arabidopsis thaliana (Mouse-ear cress).